The sequence spans 196 residues: Putative NADH dehydrogenase/NAD(P)H nitroreductase Rpal_4764 (196 aa).

It belongs to the nitroreductase family. HadB/RutE subfamily. FMN serves as cofactor.

The chain is Putative NADH dehydrogenase/NAD(P)H nitroreductase Rpal_4764 from Rhodopseudomonas palustris (strain TIE-1).